The following is a 392-amino-acid chain: Keratin, type I cuticular Ha4 (392 aa).

The interval 1–56 (MSCESCLPALSCRTSCSSRPCVPPSCHGCTLPGACNIPANVGNCNWFCEGSFNGNE) is head. The 312-residue stretch at 56-367 (EKETMQFLND…SLLESEDCNL (312 aa)) folds into the IF rod domain. The tract at residues 57 to 91 (KETMQFLNDRLASYMEKVRQLERENAELECRIQER) is coil 1A. A linker 1 region spans residues 92 to 102 (NQQQDPLVCPA). The coil 1B stretch occupies residues 103–203 (YQAYFRTIEE…HEEEVNTLRC (101 aa)). Residues 204–219 (QLGDRLNVEVDAAPTV) form a linker 12 region. The interval 220-363 (DLNRVLNETR…NTYRSLLESE (144 aa)) is coil 2. Residues 364–392 (DCNLPCNPCATTNASGSCCGPCGSSKRCC) are tail.

Belongs to the intermediate filament family. Expressed in the hair root in the hair shaft cuticle and cortex.

In Mus musculus (Mouse), this protein is Keratin, type I cuticular Ha4.